Reading from the N-terminus, the 465-residue chain is UDP-N-acetylmuramate--L-alanine ligase (465 aa).

Position 112-118 (Gly112–Thr118) interacts with ATP.

Belongs to the MurCDEF family.

It localises to the cytoplasm. It carries out the reaction UDP-N-acetyl-alpha-D-muramate + L-alanine + ATP = UDP-N-acetyl-alpha-D-muramoyl-L-alanine + ADP + phosphate + H(+). It participates in cell wall biogenesis; peptidoglycan biosynthesis. In terms of biological role, cell wall formation. The chain is UDP-N-acetylmuramate--L-alanine ligase from Janthinobacterium sp. (strain Marseille) (Minibacterium massiliensis).